The chain runs to 287 residues: Chlorophyll a-b binding protein CP29.2, chloroplastic (287 aa).

Residues 1-31 (MAATSTAAAASSIMGTRVVSDISSNSSRFTA) constitute a chloroplast transit peptide. Residue Arg-32 is modified to N2-acetylarginine. At Thr-37 the chain carries Phosphothreonine. Trp-55 is a chlorophyll b binding site. Phe-75 contacts chlorophyll a. A phosphothreonine mark is found at Thr-109 and Thr-111. The chlorophyll a site is built by Glu-137 and His-140. A helical transmembrane segment spans residues 143–163 (WAMLATLGAITVEWLTGVTWQ). Position 177 (Leu-177) interacts with chlorophyll a. Residues 181–201 (LPFSISTLIWIEVLVIGYIEF) traverse the membrane as a helical segment. Residues Glu-200 and Arg-203 each coordinate chlorophyll b. Glu-239, His-242, Arg-244, Gln-256, and His-271 together coordinate chlorophyll a. Residues 245–265 (LAMVGFLGFAVQAAATGKGPL) traverse the membrane as a helical segment.

It belongs to the light-harvesting chlorophyll a/b-binding (LHC) protein family. In terms of assembly, the LHC complex consists of chlorophyll a-b binding proteins. The cofactor is Binds at least 14 chlorophylls (8 Chl-a and 6 Chl-b) and carotenoids such as lutein and neoxanthin.. In terms of processing, photoregulated by reversible phosphorylation of its threonine residues.

It localises to the plastid. The protein localises to the chloroplast thylakoid membrane. The light-harvesting complex (LHC) functions as a light receptor, it captures and delivers excitation energy to photosystems with which it is closely associated. The sequence is that of Chlorophyll a-b binding protein CP29.2, chloroplastic (LHCB4.2) from Arabidopsis thaliana (Mouse-ear cress).